A 576-amino-acid chain; its full sequence is Lysine--tRNA ligase, mitochondrial (576 aa).

The transit peptide at 1–30 (MNVLLKRRSLTFAPRWLWCKCRSSRSRPYS) directs the protein to the mitochondrion.

The protein belongs to the class-II aminoacyl-tRNA synthetase family.

Its subcellular location is the mitochondrion matrix. The enzyme catalyses tRNA(Lys) + L-lysine + ATP = L-lysyl-tRNA(Lys) + AMP + diphosphate. Its function is as follows. Catalyzes the attachment of lysine to tRNA(Lys) in the mitochondrion. The protein is Lysine--tRNA ligase, mitochondrial (MSK1) of Saccharomyces cerevisiae (strain ATCC 204508 / S288c) (Baker's yeast).